Reading from the N-terminus, the 418-residue chain is Serine hydroxymethyltransferase (418 aa).

Residues Leu121 and 125–127 (GHL) each bind (6S)-5,6,7,8-tetrahydrofolate. Lys230 is subject to N6-(pyridoxal phosphate)lysine. Residues Glu246 and 355-357 (SPF) each bind (6S)-5,6,7,8-tetrahydrofolate.

Belongs to the SHMT family. As to quaternary structure, homodimer. The cofactor is pyridoxal 5'-phosphate.

The protein localises to the cytoplasm. It catalyses the reaction (6R)-5,10-methylene-5,6,7,8-tetrahydrofolate + glycine + H2O = (6S)-5,6,7,8-tetrahydrofolate + L-serine. The protein operates within one-carbon metabolism; tetrahydrofolate interconversion. Its pathway is amino-acid biosynthesis; glycine biosynthesis; glycine from L-serine: step 1/1. Its function is as follows. Catalyzes the reversible interconversion of serine and glycine with tetrahydrofolate (THF) serving as the one-carbon carrier. This reaction serves as the major source of one-carbon groups required for the biosynthesis of purines, thymidylate, methionine, and other important biomolecules. Also exhibits THF-independent aldolase activity toward beta-hydroxyamino acids, producing glycine and aldehydes, via a retro-aldol mechanism. This is Serine hydroxymethyltransferase from Streptococcus pneumoniae (strain ATCC 700669 / Spain 23F-1).